The primary structure comprises 202 residues: Securin (202 aa).

Positions aspartate 36–alanine 55 are disordered. The D-box signature appears at arginine 61–leucine 64. Short sequence motifs (TEK-box) lie at residues threonine 71–lysine 73 and threonine 94–lysine 96. Residues proline 163 to leucine 173 carry the SH3-binding motif. A Phosphoserine; by CDK1 modification is found at serine 165.

This sequence belongs to the securin family. In terms of assembly, interacts with RPS10 and DNAJA1. Interacts with the caspase-like ESPL1, and prevents its protease activity probably by covering its active site. Interacts with TP53 and blocks its activity probably by blocking its binding to DNA. Interacts with the Ku 70 kDa subunit of ds-DNA kinase. Interacts with PTTG1IP. In terms of processing, phosphorylated at Ser-165 by CDK1 during mitosis. Post-translationally, phosphorylated in vitro by ds-DNA kinase. Ubiquitinated through 'Lys-11' linkage of ubiquitin moieties by the anaphase promoting complex (APC) at the onset of anaphase, conducting to its degradation. 'Lys-11'-linked ubiquitination is mediated by the E2 ligase UBE2C/UBCH10.

Its subcellular location is the cytoplasm. It localises to the nucleus. Functionally, regulatory protein, which plays a central role in chromosome stability, in the p53/TP53 pathway, and DNA repair. Probably acts by blocking the action of key proteins. During the mitosis, it blocks Separase/ESPL1 function, preventing the proteolysis of the cohesin complex and the subsequent segregation of the chromosomes. At the onset of anaphase, it is ubiquitinated, conducting to its destruction and to the liberation of ESPL1. Its function is however not limited to a blocking activity, since it is required to activate ESPL1. Negatively regulates the transcriptional activity and related apoptosis activity of TP53. The negative regulation of TP53 may explain the strong transforming capability of the protein when it is overexpressed. May also play a role in DNA repair via its interaction with Ku, possibly by connecting DNA damage-response pathways with sister chromatid separation. The chain is Securin (PTTG1) from Bos taurus (Bovine).